Consider the following 95-residue polypeptide: Protein YY1 (95 aa).

An N-terminal signal peptide occupies residues 1–26; that stretch reads MAVTRTALLVVLVAGAMTMTMRGAEA. Cystine bridges form between Cys-31–Cys-72, Cys-41–Cys-61, Cys-62–Cys-87, and Cys-74–Cys-94.

This sequence belongs to the A9/FIL1 family. As to expression, anther.

The protein localises to the secreted. In Oryza sativa subsp. japonica (Rice), this protein is Protein YY1.